The primary structure comprises 445 residues: Phosphoglucosamine mutase (445 aa).

Catalysis depends on S102, which acts as the Phosphoserine intermediate. Residues S102, D241, D243, and D245 each coordinate Mg(2+). S102 carries the post-translational modification Phosphoserine.

This sequence belongs to the phosphohexose mutase family. It depends on Mg(2+) as a cofactor. In terms of processing, activated by phosphorylation.

The enzyme catalyses alpha-D-glucosamine 1-phosphate = D-glucosamine 6-phosphate. Functionally, catalyzes the conversion of glucosamine-6-phosphate to glucosamine-1-phosphate. The chain is Phosphoglucosamine mutase from Haemophilus influenzae (strain 86-028NP).